The sequence spans 355 residues: Peptide chain release factor 1 (355 aa).

N5-methylglutamine is present on Gln230.

This sequence belongs to the prokaryotic/mitochondrial release factor family. Methylated by PrmC. Methylation increases the termination efficiency of RF1.

The protein localises to the cytoplasm. Peptide chain release factor 1 directs the termination of translation in response to the peptide chain termination codons UAG and UAA. The protein is Peptide chain release factor 1 of Geobacter metallireducens (strain ATCC 53774 / DSM 7210 / GS-15).